A 254-amino-acid chain; its full sequence is Chalcone isomerase cfoK (254 aa).

Active-site residues include histidine 33 and tyrosine 50.

The enzyme catalyses a chalcone = a flavanone.. The protein operates within secondary metabolite biosynthesis; flavonoid biosynthesis. Functionally, chalcone isomerase; part of the gene cluster that mediates the biosynthesis of chlorflavonin, a fungal flavonoid with acetolactate synthase inhibitory activity. Within the pathway, cfoK acts as chalcone isomerase (CHI), the key enzyme responsible for the tricyclic formation of flavanone through Michael-type intramolecular cyclization of chalcone. The hydrogen at C2'-OH is extracted by the imidazole ring of His-33, which induces the oxa-Michael addition to form the intermediate enolate through 6-endo-trig mode cyclization. The enolate can then be stabilized by a hydrogen bond with the Tyr-50 residue. Following enol tautomerization, the C ring, a gamma-pyranone ring, is formed. The pathway begins with the PKS-NRPS hybrid synthetase cfoA that uses benzoic acid or p-hydroxybenzoic acid as a starter unit with four rounds of chain elongation using malonyl-CoA to form the chalcone skeleton. Then, a new type of chalcone isomerase, cfoK, catalyzes the conversion of the chalcone into a flavanone by a histidine-mediated oxa-Michael addition mechanism. The desaturation of flavanone to flavone is catalyzed by a new type of flavone synthase, the flavin mononucleotide (FMN)-dependent oxidoreductase cfoJ. Monooxygenases cfoF, cfoG, and P450 cfoH are responsible for the hydroxylation of the flavonoid skeleton at sites C3, C8, and C2', respectively. Like cfoF, the dehydratase cfoI plays also a role in the hydroxylation of position C3. Methyltransferases cfoB, cfoC, and cfoD then catalyze the methylation of C7-OH, C8-OH, and C3-OH, respectively. Finally, the monooxygenase cfoE is responsible for the chlorination of flavonoid at position C3'. This chain is Chalcone isomerase cfoK, found in Aspergillus candidus.